Consider the following 212-residue polypeptide: Protein-L-isoaspartate O-methyltransferase (212 aa).

Serine 60 is a catalytic residue.

The protein belongs to the methyltransferase superfamily. L-isoaspartyl/D-aspartyl protein methyltransferase family.

The protein resides in the cytoplasm. It carries out the reaction [protein]-L-isoaspartate + S-adenosyl-L-methionine = [protein]-L-isoaspartate alpha-methyl ester + S-adenosyl-L-homocysteine. Its function is as follows. Catalyzes the methyl esterification of L-isoaspartyl residues in peptides and proteins that result from spontaneous decomposition of normal L-aspartyl and L-asparaginyl residues. It plays a role in the repair and/or degradation of damaged proteins. This Methanococcus maripaludis (strain C6 / ATCC BAA-1332) protein is Protein-L-isoaspartate O-methyltransferase.